A 415-amino-acid chain; its full sequence is Serine hydroxymethyltransferase (415 aa).

(6S)-5,6,7,8-tetrahydrofolate is bound by residues Leu-117 and 121–123 (GHL). Lys-226 is subject to N6-(pyridoxal phosphate)lysine.

This sequence belongs to the SHMT family. Homodimer. Pyridoxal 5'-phosphate serves as cofactor.

The protein localises to the cytoplasm. The catalysed reaction is (6R)-5,10-methylene-5,6,7,8-tetrahydrofolate + glycine + H2O = (6S)-5,6,7,8-tetrahydrofolate + L-serine. The protein operates within one-carbon metabolism; tetrahydrofolate interconversion. It participates in amino-acid biosynthesis; glycine biosynthesis; glycine from L-serine: step 1/1. In terms of biological role, catalyzes the reversible interconversion of serine and glycine with tetrahydrofolate (THF) serving as the one-carbon carrier. This reaction serves as the major source of one-carbon groups required for the biosynthesis of purines, thymidylate, methionine, and other important biomolecules. Also exhibits THF-independent aldolase activity toward beta-hydroxyamino acids, producing glycine and aldehydes, via a retro-aldol mechanism. This chain is Serine hydroxymethyltransferase, found in Dehalococcoides mccartyi (strain ATCC BAA-2266 / KCTC 15142 / 195) (Dehalococcoides ethenogenes (strain 195)).